Here is a 421-residue protein sequence, read N- to C-terminus: Gamma-glutamyl phosphate reductase (421 aa).

This sequence belongs to the gamma-glutamyl phosphate reductase family.

It localises to the cytoplasm. It catalyses the reaction L-glutamate 5-semialdehyde + phosphate + NADP(+) = L-glutamyl 5-phosphate + NADPH + H(+). It functions in the pathway amino-acid biosynthesis; L-proline biosynthesis; L-glutamate 5-semialdehyde from L-glutamate: step 2/2. Catalyzes the NADPH-dependent reduction of L-glutamate 5-phosphate into L-glutamate 5-semialdehyde and phosphate. The product spontaneously undergoes cyclization to form 1-pyrroline-5-carboxylate. The chain is Gamma-glutamyl phosphate reductase from Pseudomonas savastanoi pv. phaseolicola (strain 1448A / Race 6) (Pseudomonas syringae pv. phaseolicola (strain 1448A / Race 6)).